We begin with the raw amino-acid sequence, 232 residues long: MLPNGKPDPASLSDRQRRILEVIRDAVVLRGYPPSIREIGDAAGLQSTSSVAYQLKELEKKGFLRRDPNKPRAVDVRHLPETDNRTKAGPKAKARPTAGASPQPELASSTSFIPVVGKIAAGSPILAEQNIEEYYPLPADIVGDGELYMLQVVGESMRDAGILDGDWVVVRSQPVAEQGEFVAAMIEGEATVKEFHKDASGIWLLPHNDSFAPIPAENAEIMGKVVSVMRKL.

Positions 36–56 form a DNA-binding region, H-T-H motif; it reads IREIGDAAGLQSTSSVAYQLK. A compositionally biased stretch (basic and acidic residues) spans 62–86; that stretch reads GFLRRDPNKPRAVDVRHLPETDNRT. Residues 62 to 107 form a disordered region; the sequence is GFLRRDPNKPRAVDVRHLPETDNRTKAGPKAKARPTAGASPQPELA. Residues Ser-156 and Lys-193 each act as for autocatalytic cleavage activity in the active site.

This sequence belongs to the peptidase S24 family. In terms of assembly, homodimer.

The catalysed reaction is Hydrolysis of Ala-|-Gly bond in repressor LexA.. In terms of biological role, represses a number of genes involved in the response to DNA damage (SOS response), including recA and lexA. In the presence of single-stranded DNA, RecA interacts with LexA causing an autocatalytic cleavage which disrupts the DNA-binding part of LexA, leading to derepression of the SOS regulon and eventually DNA repair. This chain is LexA repressor, found in Corynebacterium efficiens (strain DSM 44549 / YS-314 / AJ 12310 / JCM 11189 / NBRC 100395).